We begin with the raw amino-acid sequence, 1354 residues long: Enhancer of mRNA-decapping protein 4 homolog (1354 aa).

A disordered region spans residues 18 to 38 (PLSASSSPPPSVHRSPRCGKA). Phosphoserine is present on Ser-32. WD repeat units lie at residues 309 to 348 (EEDSLITCAALSPDGTTVAAACADGLVRFYQIYLFDVRNH) and 363 to 406 (CSLF…CLQT). The tract at residues 552-581 (ERSSLNSKRSQTPEDNLLIKEEPESPNSGT) is disordered. Over residues 554–565 (SSLNSKRSQTPE) the composition is skewed to polar residues. Ser-561 bears the Phosphoserine mark. Thr-563 carries the post-translational modification Phosphothreonine. Ser-576 carries the post-translational modification Phosphoserine. Position 581 is a phosphothreonine (Thr-581). A phosphoserine mark is found at Ser-759, Ser-762, and Ser-763. Residues 765–803 (SREVQEIMATQDDADAYEAELENLDDDDDDEEEELANSS) adopt a coiled-coil conformation. Positions 788–799 (LDDDDDDEEEEL) are enriched in acidic residues. Disordered regions lie at residues 788-811 (LDDDDDDEEEELANSSPLPEAVDG) and 838-884 (NTNN…AGGT). The segment covering 853–884 (NNNTSVGSNSNNNTATTLSTSNTSSSNNAGGT) has biased composition (low complexity). Coiled-coil stretches lie at residues 893-936 (ELNA…HSKQ), 969-1036 (NEHK…QAQM), and 1159-1188 (KHRTELTDAMLETQREVKSLEILLARQVQE). A Phosphoserine modification is found at Ser-1207. A phosphothreonine mark is found at Thr-1211 and Thr-1317. Tyr-1320 carries the phosphotyrosine modification.

It belongs to the WD repeat EDC4 family. As to quaternary structure, homodimer. Interacts with Dcp1 and Dcp2. Interacts with Gyf.

The protein resides in the cytoplasm. It is found in the P-body. In the process of mRNA degradation, seems to play a role in mRNA decapping. Required for silencing a subset of endogenous miRNA targets. In Drosophila melanogaster (Fruit fly), this protein is Enhancer of mRNA-decapping protein 4 homolog (Ge-1).